The primary structure comprises 55 residues: HTH-type transcriptional regulator MerD (55 aa).

The region spanning 3 to 55 is the HTH merR-type domain; sequence AYTVSRLALDAGVSVHIVRDYLLRGLLRPVACTPGGYGLFDDAALQRLCFVRA. The H-T-H motif DNA-binding region spans 6–25; the sequence is VSRLALDAGVSVHIVRDYLL.

The sequence is that of HTH-type transcriptional regulator MerD (merD) from Pseudomonas fluorescens.